The sequence spans 511 residues: Maturase K (511 aa).

The protein belongs to the intron maturase 2 family. MatK subfamily.

The protein resides in the plastid. The protein localises to the chloroplast. In terms of biological role, usually encoded in the trnK tRNA gene intron. Probably assists in splicing its own and other chloroplast group II introns. This is Maturase K from Bowiea volubilis (Climbing onion).